The chain runs to 393 residues: Fasciculation and elongation protein zeta-1 (393 aa).

The interval 1 to 41 (MEAPLVSLDEEFEDIRPCCTEDPEEKPQSLYGTSPHHLEDP) is disordered. Ser-58 carries the post-translational modification Phosphoserine. The interval 130–154 (NGNSSDTEIHEKEEEDEFIEKSEND) is disordered. Residues 231-299 (SELTELLDQV…KKRRKEKGLS (69 aa)) adopt a coiled-coil conformation. Ser-299 and Ser-317 each carry phosphoserine.

Belongs to the zygin family. In terms of assembly, homodimer. Interacts with UBE4B and SAP30L. Interacts with SCOC and ULK1; SCOC interferes with ULK1-binding to FEZ1. Directly interacts with SCOC and UVRAG. Stabilizes the interaction between SCOC and UVRAG during amino acid starvation. Interacts with the NH2-terminal variable region (V1) of PKC zeta and weakly with that of PKC epsilon. In terms of processing, phosphorylated by protein kinase C zeta; which enhances interaction with UBE4B and polyubiquitination. Post-translationally, polyubiquitinated in a UBE4B-dependent manner; which does not lead to proteasomal degradation and may be important for neurogenic activity. Polyubiquitin linkage seems to be mainly through Lys-26. Brain.

It is found in the cytoplasm. The protein resides in the cytoskeleton. The protein localises to the microtubule organizing center. It localises to the centrosome. Its subcellular location is the cell membrane. Its function is as follows. May be involved in axonal outgrowth as component of the network of molecules that regulate cellular morphology and axon guidance machinery. May participate in the transport of mitochondria and other cargos along microtubules. The chain is Fasciculation and elongation protein zeta-1 (Fez1) from Rattus norvegicus (Rat).